We begin with the raw amino-acid sequence, 165 residues long: Nucleotide-binding protein Suden_0039 (165 aa).

The protein belongs to the YajQ family.

In terms of biological role, nucleotide-binding protein. This Sulfurimonas denitrificans (strain ATCC 33889 / DSM 1251) (Thiomicrospira denitrificans (strain ATCC 33889 / DSM 1251)) protein is Nucleotide-binding protein Suden_0039.